Consider the following 262-residue polypeptide: Glucosamine-6-phosphate deaminase (262 aa).

Residue Asp63 is the Proton acceptor; for enolization step of the active site. The active-site For ring-opening step is the Asn129. His131 serves as the catalytic Proton acceptor; for ring-opening step. Glu136 (for ring-opening step) is an active-site residue.

This sequence belongs to the glucosamine/galactosamine-6-phosphate isomerase family. NagB subfamily.

It carries out the reaction alpha-D-glucosamine 6-phosphate + H2O = beta-D-fructose 6-phosphate + NH4(+). It participates in amino-sugar metabolism; N-acetylneuraminate degradation; D-fructose 6-phosphate from N-acetylneuraminate: step 5/5. Functionally, catalyzes the reversible isomerization-deamination of glucosamine 6-phosphate (GlcN6P) to form fructose 6-phosphate (Fru6P) and ammonium ion. The polypeptide is Glucosamine-6-phosphate deaminase (Bacillus cytotoxicus (strain DSM 22905 / CIP 110041 / 391-98 / NVH 391-98)).